Reading from the N-terminus, the 491-residue chain is Histamine H1 receptor (491 aa).

The Extracellular segment spans residues 1–30 (MTCPNSSCVFEDKMCQGNKTAPANDAQLTP). Asn5 and Asn18 each carry an N-linked (GlcNAc...) asparagine glycan. A helical transmembrane segment spans residues 31 to 51 (LVVVLSTISLVTVGLNLLVLY). Topologically, residues 52–65 (AVRSERKLHTVGNL) are cytoplasmic. The chain crosses the membrane as a helical span at residues 66–90 (YIVSLSVADLIVGVVVMPMNILYLL). Residues 91-98 (MSRWSLGR) lie on the Extracellular side of the membrane. The helical transmembrane segment at 99 to 124 (PLCLFWLSMDYVASTASIFSVFILCI) threads the bilayer. A disulfide bridge connects residues Cys101 and Cys181. 2 residues coordinate histamine: Asp108 and Thr113. Positions 108 to 113 (DYVAST) are important for agonist binding. Over 125 to 145 (DRYRSVQQPLKYLRYRTKTRA) the chain is Cytoplasmic. 2 positions are modified to phosphothreonine: Thr141 and Thr143. Residues 146 to 165 (SITILAAWFLSFLWIIPILG) form a helical membrane-spanning segment. At 166–189 (WRHFQPKTPEPREDKCETDFYNVT) the chain is on the extracellular side. The chain crosses the membrane as a helical span at residues 190 to 212 (WFKVMTAIINFYLPTLLMLWFYA). Histamine is bound at residue Asn199. Residues 213 to 420 (KIYKAVRQHC…MNRERKAAKQ (208 aa)) are Cytoplasmic-facing. Ser231 carries the phosphoserine modification. 2 disordered regions span residues 246-297 (QVGA…KEEK) and 360-385 (QSFS…SESS). Residues 252–262 (PGKESPWEVLK) show a composition bias toward basic and acidic residues. A phosphoserine mark is found at Ser384, Ser400, and Ser402. A helical transmembrane segment spans residues 421–444 (LGFIMAAFIICWIPYFIFFMVIAF). Residues 428 to 432 (FIICW) form an important for agonist binding region. Tyr435 serves as a coordination point for histamine. A disulfide bond links Cys445 and Cys448. The Extracellular portion of the chain corresponds to 445–450 (CESCCN). The chain crosses the membrane as a helical span at residues 451 to 473 (QHVHMFTIWLGYINSTLNPLIYP). Residues 474 to 491 (LCNENFKKTFKKILHIRS) are Cytoplasmic-facing.

It belongs to the G-protein coupled receptor 1 family. Post-translationally, phosphorylation at sites in the second and third cytoplasmic loops independently contribute to agonist-induced receptor down-regulation. In terms of tissue distribution, brain, lung, small intestine, uterus, adrenal medulla and spleen.

It is found in the cell membrane. In terms of biological role, G-protein-coupled receptor for histamine, a biogenic amine that functions as an immune modulator and a neurotransmitter. Through the H1 receptor, histamine mediates the contraction of smooth muscles and increases capillary permeability due to contraction of terminal venules. Also mediates neurotransmission in the central nervous system and thereby regulates circadian rhythms, emotional and locomotor activities as well as cognitive functions. The polypeptide is Histamine H1 receptor (Bos taurus (Bovine)).